A 334-amino-acid polypeptide reads, in one-letter code: Methionine adenosyltransferase 2 subunit beta (334 aa).

NADP(+) contacts are provided by residues 37–40, 60–62, 71–72, cysteine 93, arginine 97, tyrosine 159, and leucine 185; these read TGLL, FRR, and NL. At threonine 309 the chain carries Phosphothreonine. The tract at residues 319–334 is required for interaction with MAT2A; the sequence is LWPFLIDKRWRQTVFH.

This sequence belongs to the dTDP-4-dehydrorhamnose reductase family. MAT2B subfamily. Heterotrimer; composed of a catalytic MAT2A homodimer that binds one regulatory MAT2B chain. Heterohexamer; composed of a central, catalytic MAT2A homotetramer flanked on either side by a regulatory MAT2B chain. NADP binding increases the affinity for MAT2A.

It functions in the pathway amino-acid biosynthesis; S-adenosyl-L-methionine biosynthesis; S-adenosyl-L-methionine from L-methionine: step 1/1. Regulatory subunit of S-adenosylmethionine synthetase 2, an enzyme that catalyzes the formation of S-adenosylmethionine from methionine and ATP. Regulates MAT2A catalytic activity by changing its kinetic properties, increasing its affinity for L-methionine. Can bind NADP (in vitro). The sequence is that of Methionine adenosyltransferase 2 subunit beta (Mat2b) from Rattus norvegicus (Rat).